The primary structure comprises 92 residues: MTRSLRKGPFVASHLAKKVDAAVASNSNNIIKTWSRSSTILPTMVGLTIAVYNGKQHVPVYVSDQMVGHKLGEFSPTRTFRSHVKSDKKARR.

The protein belongs to the universal ribosomal protein uS19 family.

It is found in the plastid. It localises to the chloroplast. In terms of biological role, protein S19 forms a complex with S13 that binds strongly to the 16S ribosomal RNA. The polypeptide is Small ribosomal subunit protein uS19c (Rhodomonas salina (Cryptomonas salina)).